The following is a 351-amino-acid chain: Phosphate acyltransferase (351 aa).

The protein belongs to the PlsX family. In terms of assembly, homodimer. Probably interacts with PlsY.

It localises to the cytoplasm. The catalysed reaction is a fatty acyl-[ACP] + phosphate = an acyl phosphate + holo-[ACP]. The protein operates within lipid metabolism; phospholipid metabolism. Catalyzes the reversible formation of acyl-phosphate (acyl-PO(4)) from acyl-[acyl-carrier-protein] (acyl-ACP). This enzyme utilizes acyl-ACP as fatty acyl donor, but not acyl-CoA. The sequence is that of Phosphate acyltransferase from Gloeothece citriformis (strain PCC 7424) (Cyanothece sp. (strain PCC 7424)).